Here is a 92-residue protein sequence, read N- to C-terminus: MARTVNCVYLKKEAEGLGFQLYPGDLGKRIFDNVSKEAWALWQSKQTMLINENKLNMMNVDDRKFLEEQMINFLFEGKDVEIEGYVPQKDDE.

The protein belongs to the Fe(2+)-trafficking protein family.

Its function is as follows. Could be a mediator in iron transactions between iron acquisition and iron-requiring processes, such as synthesis and/or repair of Fe-S clusters in biosynthetic enzymes. This chain is Probable Fe(2+)-trafficking protein, found in Shewanella piezotolerans (strain WP3 / JCM 13877).